A 308-amino-acid polypeptide reads, in one-letter code: Protein translocase subunit SecF (308 aa).

Helical transmembrane passes span 28 to 48, 140 to 160, 164 to 184, 194 to 214, 246 to 266, and 272 to 292; these read SIIL…NFGI, IEAG…YIWV, WYFG…ALGF, LSTI…SVVI, ILTV…GGEA, and ILVF…SAPI.

The protein belongs to the SecD/SecF family. SecF subfamily. As to quaternary structure, forms a complex with SecD. Part of the essential Sec protein translocation apparatus which comprises SecA, SecYEG and auxiliary proteins SecDF-YajC and YidC.

It localises to the cell inner membrane. Its function is as follows. Part of the Sec protein translocase complex. Interacts with the SecYEG preprotein conducting channel. SecDF uses the proton motive force (PMF) to complete protein translocation after the ATP-dependent function of SecA. The chain is Protein translocase subunit SecF from Rickettsia rickettsii (strain Sheila Smith).